We begin with the raw amino-acid sequence, 352 residues long: MAIISSNIGDNDFSFRKKELRLVDSKNIPEEKRNNNLNLARPLNLKEFIGQEQLKSSLRVAIDASIIRKEPLEHTLLYGQPGLGKTTLAFLIAHELNTKCRIATAPAIERPRDIVGLLLGLKEGEVLFIDEIHRLNRLTEELLYSAMEDFRLDLTMGANRGARCRTINLPRFTLIGATTKLASISAPLRDRFGISQKIEFYTCDELKQIIVNFSRLINLNLEDEASYDLAKISRGTPRIALRLLRRVRDYAQVVMKTNTISVNLIKKALNSYQIDEKGLDSLDRHYLSFLNQNNNIPIGLDSIASGLGDDSSMLEFVVEPYLIKIGFLTRTPRGRLLTALGKKYIDSKDDNF.

The interval 13-201 is large ATPase domain (RuvB-L); sequence FSFRKKELRL…FGISQKIEFY (189 aa). ATP-binding positions include arginine 41, glycine 82, lysine 85, threonine 86, threonine 87, 148–150, arginine 191, tyrosine 201, and arginine 238; that span reads EDF. Threonine 86 contributes to the Mg(2+) binding site. The interval 202–273 is small ATPAse domain (RuvB-S); it reads TCDELKQIIV…LIKKALNSYQ (72 aa). Residues 276–352 are head domain (RuvB-H); sequence EKGLDSLDRH…KYIDSKDDNF (77 aa). DNA is bound by residues arginine 330 and arginine 335.

It belongs to the RuvB family. In terms of assembly, homohexamer. Forms an RuvA(8)-RuvB(12)-Holliday junction (HJ) complex. HJ DNA is sandwiched between 2 RuvA tetramers; dsDNA enters through RuvA and exits via RuvB. An RuvB hexamer assembles on each DNA strand where it exits the tetramer. Each RuvB hexamer is contacted by two RuvA subunits (via domain III) on 2 adjacent RuvB subunits; this complex drives branch migration. In the full resolvosome a probable DNA-RuvA(4)-RuvB(12)-RuvC(2) complex forms which resolves the HJ.

The protein resides in the cytoplasm. The catalysed reaction is ATP + H2O = ADP + phosphate + H(+). In terms of biological role, the RuvA-RuvB-RuvC complex processes Holliday junction (HJ) DNA during genetic recombination and DNA repair, while the RuvA-RuvB complex plays an important role in the rescue of blocked DNA replication forks via replication fork reversal (RFR). RuvA specifically binds to HJ cruciform DNA, conferring on it an open structure. The RuvB hexamer acts as an ATP-dependent pump, pulling dsDNA into and through the RuvAB complex. RuvB forms 2 homohexamers on either side of HJ DNA bound by 1 or 2 RuvA tetramers; 4 subunits per hexamer contact DNA at a time. Coordinated motions by a converter formed by DNA-disengaged RuvB subunits stimulates ATP hydrolysis and nucleotide exchange. Immobilization of the converter enables RuvB to convert the ATP-contained energy into a lever motion, pulling 2 nucleotides of DNA out of the RuvA tetramer per ATP hydrolyzed, thus driving DNA branch migration. The RuvB motors rotate together with the DNA substrate, which together with the progressing nucleotide cycle form the mechanistic basis for DNA recombination by continuous HJ branch migration. Branch migration allows RuvC to scan DNA until it finds its consensus sequence, where it cleaves and resolves cruciform DNA. The sequence is that of Holliday junction branch migration complex subunit RuvB from Prochlorococcus marinus (strain AS9601).